The primary structure comprises 82 residues: Pigment-dispersing hormone peptides (82 aa).

Residues 1–26 (MIGKYLSWFMLAFLFGFVLESYRVQS) form the signal peptide. An Alanine amide modification is found at Ala-80.

It belongs to the arthropod PDH family. Expressed strongly in the head and weakly in the ventral nerve cord. Not detected in the midgut cecum or hindgut. In the cephalic neural complex, specifically localized to cells within the optic lobe, anteromedian protocerebrum, accessory lobe, tritocerebrum, and subesophageal ganglion.

It is found in the secreted. In terms of biological role, the pigment-dispersing hormone causes the migration of the distal retinal pigment into the proximal end of the pigment chromatophore cells and thus decreases the amount of light entering the retinulas. May also function as a neurotransmitter and/or neuromodulator. This chain is Pigment-dispersing hormone peptides, found in Armadillidium vulgare (Pillbug).